A 242-amino-acid polypeptide reads, in one-letter code: ATP-dependent dethiobiotin synthetase BioD (242 aa).

12–17 (EVGKTV) is a binding site for ATP. Threonine 16 lines the Mg(2+) pocket. Residue lysine 37 is part of the active site. Residue serine 41 coordinates substrate. ATP contacts are provided by residues aspartate 51 and 112–115 (EGAG). Mg(2+)-binding residues include aspartate 51 and glutamate 112.

Belongs to the dethiobiotin synthetase family. Homodimer. The cofactor is Mg(2+).

The protein localises to the cytoplasm. The catalysed reaction is (7R,8S)-7,8-diammoniononanoate + CO2 + ATP = (4R,5S)-dethiobiotin + ADP + phosphate + 3 H(+). It participates in cofactor biosynthesis; biotin biosynthesis; biotin from 7,8-diaminononanoate: step 1/2. Functionally, catalyzes a mechanistically unusual reaction, the ATP-dependent insertion of CO2 between the N7 and N8 nitrogen atoms of 7,8-diaminopelargonic acid (DAPA, also called 7,8-diammoniononanoate) to form a ureido ring. This chain is ATP-dependent dethiobiotin synthetase BioD, found in Bacillus cereus (strain B4264).